Here is a 1032-residue protein sequence, read N- to C-terminus: Leucine-rich repeat and coiled-coil domain-containing protein 1 (1032 aa).

LRR repeat units lie at residues 44-65 (TLHA…DHIW), 66-87 (NLQH…NTLT), 88-109 (KLCT…EELI), 110-131 (NLTR…IPLH), and 136-157 (KLRY…LQCM). In terms of domain architecture, LRRCT spans 175–218 (NPVCRLPGYRAVILQTLPQLRILDCKNIFGEPVNLTEINSSQLQ). The interval 316 to 345 (DNVLEKDPRPKRDTDITSESDYGNRKECNR) is disordered. Positions 318 to 330 (VLEKDPRPKRDTD) are enriched in basic and acidic residues. Positions 421–647 (NTYQSLVEQL…DLENEFRIAL (227 aa)) form a coiled coil.

It belongs to the LRRCC1 family.

It localises to the cytoplasm. The protein resides in the cytoskeleton. It is found in the microtubule organizing center. The protein localises to the centrosome. Its subcellular location is the centriole. Required for the organization of the mitotic spindle. Maintains the structural integrity of centrosomes during mitosis. The polypeptide is Leucine-rich repeat and coiled-coil domain-containing protein 1 (LRRCC1) (Homo sapiens (Human)).